Here is a 138-residue protein sequence, read N- to C-terminus: Protein PsiE homolog (138 aa).

Helical transmembrane passes span 14–34, 56–76, 84–104, and 109–129; these read LQAL…GLLI, YEML…ALII, HFPL…LIII, and AIST…FFIV.

This sequence belongs to the PsiE family.

It is found in the cell membrane. The chain is Protein PsiE homolog from Bacillus velezensis (strain DSM 23117 / BGSC 10A6 / LMG 26770 / FZB42) (Bacillus amyloliquefaciens subsp. plantarum).